The chain runs to 461 residues: tRNA modification GTPase MnmE (461 aa).

3 residues coordinate (6S)-5-formyl-5,6,7,8-tetrahydrofolate: R22, E87, and R126. Residues 222 to 382 (GLKTVIVGKP…LEETIFNMVV (161 aa)) form the TrmE-type G domain. N232 is a K(+) binding site. Residues 232–237 (NVGKSS), 251–257 (TDIPGTT), and 276–279 (DTAG) contribute to the GTP site. S236 provides a ligand contact to Mg(2+). K(+)-binding residues include T251, I253, and T256. T257 is a Mg(2+) binding site. K461 contacts (6S)-5-formyl-5,6,7,8-tetrahydrofolate.

Belongs to the TRAFAC class TrmE-Era-EngA-EngB-Septin-like GTPase superfamily. TrmE GTPase family. In terms of assembly, homodimer. Heterotetramer of two MnmE and two MnmG subunits. Requires K(+) as cofactor.

Its subcellular location is the cytoplasm. Its function is as follows. Exhibits a very high intrinsic GTPase hydrolysis rate. Involved in the addition of a carboxymethylaminomethyl (cmnm) group at the wobble position (U34) of certain tRNAs, forming tRNA-cmnm(5)s(2)U34. In Desulforamulus reducens (strain ATCC BAA-1160 / DSM 100696 / MI-1) (Desulfotomaculum reducens), this protein is tRNA modification GTPase MnmE.